A 297-amino-acid chain; its full sequence is Bifunctional protein FolD 1 (297 aa).

NADP(+) is bound by residues 164-166, serine 193, and isoleucine 234; that span reads GRS.

It belongs to the tetrahydrofolate dehydrogenase/cyclohydrolase family. In terms of assembly, homodimer.

It carries out the reaction (6R)-5,10-methylene-5,6,7,8-tetrahydrofolate + NADP(+) = (6R)-5,10-methenyltetrahydrofolate + NADPH. The enzyme catalyses (6R)-5,10-methenyltetrahydrofolate + H2O = (6R)-10-formyltetrahydrofolate + H(+). Its pathway is one-carbon metabolism; tetrahydrofolate interconversion. In terms of biological role, catalyzes the oxidation of 5,10-methylenetetrahydrofolate to 5,10-methenyltetrahydrofolate and then the hydrolysis of 5,10-methenyltetrahydrofolate to 10-formyltetrahydrofolate. The polypeptide is Bifunctional protein FolD 1 (Haloarcula marismortui (strain ATCC 43049 / DSM 3752 / JCM 8966 / VKM B-1809) (Halobacterium marismortui)).